We begin with the raw amino-acid sequence, 346 residues long: Ly6/PLAUR domain-containing protein 3 (346 aa).

Residues 1–30 (MDPARKAGAQAMIWTAGWLLLLLLRGGAQA) form the signal peptide. 2 consecutive UPAR/Ly6 domains span residues 33-126 (CYSC…ALDP) and 140-222 (CYSC…SRCN). 4 N-linked (GlcNAc...) asparagine glycosylation sites follow: Asn-118, Asn-163, Asn-176, and Asn-183. The tract at residues 233-324 (PRIPPLVRLP…KGGPQQPHNK (92 aa)) is disordered. Residues 234–246 (RIPPLVRLPPPEP) show a composition bias toward pro residues. A compositionally biased stretch (low complexity) spans 247–269 (TTVASTTSVTTSTSAPVRPTSTT). Positions 283–295 (GVEHEASRDEEPR) are enriched in basic and acidic residues. Cys-326 is lipidated: GPI-anchor amidated cysteine. The propeptide at 327-346 (VAPTAGLAALLLAVAAGVLL) is removed in mature form.

As to quaternary structure, binds laminin-1 and laminin-5. Interacts with LGALS3. Interacts with AGR2 and AGR3. N-glycosylated and O-glycosylated. In terms of tissue distribution, expressed in placenta, skin and urothelium. Found in suprabasal keratinocytes of chronic wounds. Weak expression is found in esophagus and peripheral blood mononuclear cells. Found in the majority of primary and metastatic transitional cell carcinomas (TCCs) and as well in breast cancer tissues, but not in adjacent normal tissues. High expression is found in the tumor component of some noninvasive superficial lesions and in invasive and metastatic urothelial cancers.

Its subcellular location is the cell membrane. Supports cell migration. May be involved in urothelial cell-matrix interactions. May be involved in tumor progression. The protein is Ly6/PLAUR domain-containing protein 3 (LYPD3) of Homo sapiens (Human).